The sequence spans 124 residues: Small ribosomal subunit protein uS13 (124 aa).

The tract at residues 98–124 (VRGQRTKTNARTRKGPKRTIAGKKKAR) is disordered.

The protein belongs to the universal ribosomal protein uS13 family. As to quaternary structure, part of the 30S ribosomal subunit. Forms a loose heterodimer with protein S19. Forms two bridges to the 50S subunit in the 70S ribosome.

Located at the top of the head of the 30S subunit, it contacts several helices of the 16S rRNA. In the 70S ribosome it contacts the 23S rRNA (bridge B1a) and protein L5 of the 50S subunit (bridge B1b), connecting the 2 subunits; these bridges are implicated in subunit movement. Contacts the tRNAs in the A and P-sites. The chain is Small ribosomal subunit protein uS13 from Mycobacterium leprae (strain Br4923).